A 1052-amino-acid polypeptide reads, in one-letter code: Protein HelA (1052 aa).

Helical transmembrane passes span 14–34 (WFVLLFTLVIAILGVYNFQRL), 121–141 (LPPGVETTLGPISTGLGEIFM), 348–368 (GALLVCVILFLFLGNIRAALI), 369–389 (TAMVIPLSMLLTITGMVENQI), 393–413 (LMSLGALDFGLIVDGAVIIVE), 450–470 (SIFGVFIITVVYLPILTLTGV), 483–503 (IIALLASMLFALTFVPAAVAI), 537–557 (VVISAAVALVVVSLGIAFHLG), 878–898 (LQIVVPITLLGIFLLLFISFG), 903–923 (ALLVFTGIPLALTGGVFALWL), 934–954 (VGFIALSGVAVLNGLVMITFI), 979–999 (PVLMTALVASLGFVPMALATG), and 1011–1031 (VVIGGIISSTFLTLLVLPGLY).

This sequence belongs to the resistance-nodulation-cell division (RND) (TC 2.A.6) family.

The protein resides in the cell inner membrane. In terms of biological role, presumed to function with HelC and HelB in efflux of an unidentified substrate. The polypeptide is Protein HelA (helA) (Legionella pneumophila).